A 524-amino-acid polypeptide reads, in one-letter code: 3-epi-6-deoxocathasterone 23-monooxygenase CYP90C1 (524 aa).

Residues tyrosine 25–leucine 45 traverse the membrane as a helical segment. Cysteine 463 contributes to the heme binding site.

The protein belongs to the cytochrome P450 family. It depends on heme as a cofactor. As to expression, widely expressed.

Its subcellular location is the endoplasmic reticulum membrane. The enzyme catalyses 3-epi-6-deoxocathasterone + reduced [NADPH--hemoprotein reductase] + O2 = 6-deoxotyphasterol + oxidized [NADPH--hemoprotein reductase] + H2O + H(+). The catalysed reaction is (22S,24R)-22-hydroxy-5alpha-ergostan-3-one + reduced [NADPH--hemoprotein reductase] + O2 = 3-dehydro-6-deoxoteasterone + oxidized [NADPH--hemoprotein reductase] + H2O + H(+). The protein operates within plant hormone biosynthesis; brassinosteroid biosynthesis. In terms of biological role, involved in brassinosteroid (BR) biosynthesis. Converts typhasterol (TY) to cathasterone (CS) and 6-deoxotyphasterol (6-deoxoTY) to 6-deoxocathasterone (6-deoxoCT). C-23 hydroxylase that converts directly (22S,24R)-22-hydroxy-5-alpha-ergostan-3-one and 3-epi-6-deoxocathasterone to 3-dehydro-6-deoxoteasterone (6-deoxo3DT, 6-deoxo3DHT) and 6-deoxotyphasterol (6-deoxoTY), respectively. These C-23 hydroxylation shortcuts bypass campestanol, 6-deoxocathasterone, and 6-deoxoteasterone (6-deoxoTE). Also catalyzes the conversion of cathasterone to teasterone (TE), (22S,24R)-22-hydroxyergost-4-en-3-one (22-OH-4-en-3-one) to (22R,23R)-22,23-dihydroxy-campest-4-en-3-one (22,23-diOH-4-en-3-one) and (22S)-22-hydroxycampesterol (22-OHCR) to (22R,23R)-22,23-dihydroxycampesterol (22,23-diOHCR). Required for the regulation of polar elongation of leaf cells. Required for the longitudinal elongation of floral organs. This chain is 3-epi-6-deoxocathasterone 23-monooxygenase CYP90C1, found in Arabidopsis thaliana (Mouse-ear cress).